Here is a 69-residue protein sequence, read N- to C-terminus: Conotoxin Gla-TxXI (69 aa).

The first 25 residues, 1 to 25, serve as a signal peptide directing secretion; it reads MVRVTSVGCFLLVIVSLNLVVLTNA. Intrachain disulfides connect Cys-26-Cys-40, Cys-33-Cys-45, Cys-39-Cys-49, and Cys-44-Cys-53. Glu-29 carries the post-translational modification 4-carboxyglutamate. At Pro-56 the chain carries Proline amide. Positions 60-69 are excised as a propeptide; it reads AKLLEFFRQR.

Contains 4 disulfide bonds. In terms of tissue distribution, expressed by the venom duct.

Its subcellular location is the secreted. This chain is Conotoxin Gla-TxXI, found in Conus textile (Cloth-of-gold cone).